The sequence spans 480 residues: Peptidase S41 family protein ustP (480 aa).

The tract at residues 78–97 is disordered; sequence CMPNKKSRPPDPRPSLAVGK. A peptidase S41 domain region spans residues 134 to 336; the sequence is DVAVLQLPTF…LKQQGVRSIV (203 aa).

It belongs to the peptidase S41A family.

It functions in the pathway mycotoxin biosynthesis. Peptidase S41 family protein; part of the gene cluster that mediates the biosynthesis of the secondary metabolite ustiloxin B, an antimitotic tetrapeptide. First, ustA is processed by the subtilisin-like endoprotease Kex2 that is outside the ustiloxin B gene cluster, at the C-terminal side of Arg-Lys, after transfer to Golgi apparatus through the endoplasmic reticulum (ER). Cleavage by KEX2 generates 16 peptides YAIG-I to YAIG-XVI. To process the precursor peptide further, at least two peptidases are necessary to cleave the N-terminal and C-terminal sides of the Tyr-Ala-Ile-Gly core peptide which serves as backbone for the synthesis of ustiloxin B, through cyclization and modification of the tyrosine with a non-protein coding amino acid, norvaline. One of the two peptidases must be the serine peptidase ustP; and the other pepdidase is probably ustH. Macrocyclization of the core peptide derived from ustA requires the tyrosinase ustQ, as well as the homologous oxidases ustYa and ustYb, and leads to the production of the first cyclization product N-desmethylustiloxin F. For the formation of N-desmethylustiloxin F, three oxidation steps are required, hydroxylation at the benzylic position, hydroxylation at either the aromatic ring of Tyr or beta-position of Ile, and oxidative cyclization. UstQ may catalyze the oxidation of a phenol moiety, whereas the ustYa and ustYb are most likely responsible for the remaining two-step oxidations. N-desmethylustiloxin F is then methylated by ustM to yield ustiloxin F which in turn substrate of the cytochrome P450 monooxygenase ustC which catalyzes the formation of S-deoxyustiloxin H. The flavoprotein monooxygenases ustF1 and ustF2 then participate in the modification of the side chain of S-deoxyustiloxin H, leading to the synthesis of an oxime intermediate, via ustiloxin H. Finally, carboxylative dehydration performed by the cysteine desulfurase-like protein ustD yields ustiloxin B. This is Peptidase S41 family protein ustP from Aspergillus flavus (strain ATCC 200026 / FGSC A1120 / IAM 13836 / NRRL 3357 / JCM 12722 / SRRC 167).